Reading from the N-terminus, the 394-residue chain is Probable 6-phosphogluconolactonase ARB_02015 (394 aa).

The first 21 residues, 1–21 (MKTVPFLSLLQAGILTSGIVA), serve as a signal peptide directing secretion. N51 is a glycosylation site (N-linked (GlcNAc...) asparagine).

It belongs to the cycloisomerase 2 family.

It localises to the secreted. It catalyses the reaction 6-phospho-D-glucono-1,5-lactone + H2O = 6-phospho-D-gluconate + H(+). Its pathway is carbohydrate degradation; pentose phosphate pathway; D-ribulose 5-phosphate from D-glucose 6-phosphate (oxidative stage): step 2/3. Its function is as follows. Catalyzes the hydrolysis of 6-phosphogluconolactone to 6-phosphogluconate. The chain is Probable 6-phosphogluconolactonase ARB_02015 from Arthroderma benhamiae (strain ATCC MYA-4681 / CBS 112371) (Trichophyton mentagrophytes).